A 647-amino-acid polypeptide reads, in one-letter code: Phosphatidylinositol polyphosphate 5-phosphatase type IV (647 aa).

Disordered stretches follow at residues 1 to 80 (MPSK…QPPI), 101 to 131 (RGSQ…PAYS), and 177 to 196 (HRDA…HASH). Residues 52 to 55 (PMPP) form repeat 1. Residues 52-243 (PMPPFSIPAK…AHSNLGPSRP (192 aa)) are 3 X 4 AA repeats of P-X-X-P. Over residues 60–75 (AKTSNQNPQTKANLIT) the composition is skewed to polar residues. Residues 76 to 79 (PQPP) form repeat 2. Ser-103 bears the Phosphoserine mark. A compositionally biased stretch (polar residues) spans 120-129 (LQDSVAQSPA). Residue Thr-197 is modified to Phosphothreonine. Residues 240–243 (PSRP) form repeat 3. A phosphoserine mark is found at Ser-245 and Ser-259. Cys-644 bears the Cysteine methyl ester mark. Cys-644 carries S-farnesyl cysteine lipidation. Residues 645–647 (TVS) constitute a propeptide, removed in mature form.

The protein belongs to the inositol polyphosphate 5-phosphatase family. Interacts (when prenylated) with PDE6D; this is important for normal location in cilia. As to expression, highly expressed in testis, in pachytene and diplotene spermatocytes, but not in more mature elongating spermatids. Detected in neurons throughout the brain.

It localises to the cytoplasm. The protein localises to the cytoskeleton. It is found in the cilium axoneme. The protein resides in the golgi apparatus. Its subcellular location is the golgi stack membrane. It localises to the cell projection. The protein localises to the ruffle. It is found in the cell membrane. The protein resides in the nucleus. It carries out the reaction a 1,2-diacyl-sn-glycero-3-phospho-(1D-myo-inositol-4,5-bisphosphate) + H2O = a 1,2-diacyl-sn-glycero-3-phospho-(1D-myo-inositol 4-phosphate) + phosphate. The enzyme catalyses a 1,2-diacyl-sn-glycero-3-phospho-(1D-myo-inositol-3,4,5-trisphosphate) + H2O = a 1,2-diacyl-sn-glycero-3-phospho-(1D-myo-inositol-3,4-bisphosphate) + phosphate. The catalysed reaction is a 1,2-diacyl-sn-glycero-3-phospho-(1D-myo-inositol-3,5-bisphosphate) + H2O = a 1,2-diacyl-sn-glycero-3-phospho-(1D-myo-inositol-3-phosphate) + phosphate. Its function is as follows. Phosphatidylinositol (PtdIns) phosphatase that specifically hydrolyzes the 5-phosphate of phosphatidylinositol-3,4,5-trisphosphate (PtdIns(3,4,5)P3), phosphatidylinositol 4,5-bisphosphate (PtdIns(4,5)P2) and phosphatidylinositol 3,5-bisphosphate (PtdIns(3,5)P2). Specific for lipid substrates, inactive towards water soluble inositol phosphates. Specific for lipid substrates, inactive towards water soluble inositol phosphates. Plays an essential role in the primary cilium by controlling ciliary growth and phosphoinositide 3-kinase (PI3K) signaling and stability. The protein is Phosphatidylinositol polyphosphate 5-phosphatase type IV (Inpp5e) of Mus musculus (Mouse).